The sequence spans 384 residues: uncharacterized protein (384 aa).

This is an uncharacterized protein from Acanthamoeba polyphaga (Amoeba).